A 101-amino-acid polypeptide reads, in one-letter code: Small ribosomal subunit protein bS18c (101 aa).

A compositionally biased stretch (basic residues) spans 1–19 (MDKSKQLFRKSKRSFRRRL). Residues 1–23 (MDKSKQLFRKSKRSFRRRLPPIG) are disordered.

The protein belongs to the bacterial ribosomal protein bS18 family. In terms of assembly, part of the 30S ribosomal subunit.

It localises to the plastid. It is found in the chloroplast. The sequence is that of Small ribosomal subunit protein bS18c from Acorus calamus (Sweet flag).